A 488-amino-acid chain; its full sequence is UDP-N-acetylmuramate--L-alanine ligase (488 aa).

126 to 132 provides a ligand contact to ATP; it reads GTHGKTT.

It belongs to the MurCDEF family.

The protein resides in the cytoplasm. The catalysed reaction is UDP-N-acetyl-alpha-D-muramate + L-alanine + ATP = UDP-N-acetyl-alpha-D-muramoyl-L-alanine + ADP + phosphate + H(+). It participates in cell wall biogenesis; peptidoglycan biosynthesis. Cell wall formation. The sequence is that of UDP-N-acetylmuramate--L-alanine ligase from Cronobacter sakazakii (strain ATCC BAA-894) (Enterobacter sakazakii).